Here is a 707-residue protein sequence, read N- to C-terminus: Elongation factor G (707 aa).

Residues 8-290 (ERYRNIGICA…AVIEYLPSPT (283 aa)) form the tr-type G domain. GTP-binding positions include 17–24 (AHVDAGKT), 88–92 (DTPGH), and 142–145 (NKMD).

It belongs to the TRAFAC class translation factor GTPase superfamily. Classic translation factor GTPase family. EF-G/EF-2 subfamily.

The protein resides in the cytoplasm. Its function is as follows. Catalyzes the GTP-dependent ribosomal translocation step during translation elongation. During this step, the ribosome changes from the pre-translocational (PRE) to the post-translocational (POST) state as the newly formed A-site-bound peptidyl-tRNA and P-site-bound deacylated tRNA move to the P and E sites, respectively. Catalyzes the coordinated movement of the two tRNA molecules, the mRNA and conformational changes in the ribosome. The polypeptide is Elongation factor G (Idiomarina loihiensis (strain ATCC BAA-735 / DSM 15497 / L2-TR)).